A 105-amino-acid chain; its full sequence is Large ribosomal subunit protein uL23 (105 aa).

The protein belongs to the universal ribosomal protein uL23 family. Part of the 50S ribosomal subunit. Contacts protein L29, and trigger factor when it is bound to the ribosome.

Functionally, one of the early assembly proteins it binds 23S rRNA. One of the proteins that surrounds the polypeptide exit tunnel on the outside of the ribosome. Forms the main docking site for trigger factor binding to the ribosome. In Herminiimonas arsenicoxydans, this protein is Large ribosomal subunit protein uL23.